Consider the following 63-residue polypeptide: Frenatin 1.1 (63 aa).

Positions 1-22 (MAFLKKSLFLVLFLGLVSLSIC) are cleaved as a signal peptide. A propeptide spanning residues 23-49 (EKEKKEQEDEDENEEEKESEEGSEEKR) is cleaved from the precursor. The disordered stretch occupies residues 25–63 (EKKEQEDEDENEEEKESEEGSEEKRGLLDTLGGILGLGR). Residues 30–45 (EDEDENEEEKESEEGS) show a composition bias toward acidic residues. L61 is subject to Leucine amide.

As to expression, expressed by the skin glands.

It localises to the secreted. Functionally, antimicrobial peptide with selective activity. Is only active against Micrococcus luteus (MIC=25 ug/ml) and not against Bacillus cereus, Escherichia coli, Leuconostoc mesenteroides, Micrococcus luteus, Pastewella haemolytica, Staphylococcus aureus, Streptococcus faecalis and Streptococcus uberis. In Nyctimystes infrafrenatus (White-lipped tree frog), this protein is Frenatin 1.1.